The primary structure comprises 522 residues: Light-independent protochlorophyllide reductase subunit B (522 aa).

Aspartate 36 serves as a coordination point for [4Fe-4S] cluster. Aspartate 290 serves as the catalytic Proton donor. 425–426 (GL) is a binding site for substrate.

The protein belongs to the ChlB/BchB/BchZ family. As to quaternary structure, protochlorophyllide reductase is composed of three subunits; ChlL, ChlN and ChlB. Forms a heterotetramer of two ChlB and two ChlN subunits. [4Fe-4S] cluster is required as a cofactor.

It carries out the reaction chlorophyllide a + oxidized 2[4Fe-4S]-[ferredoxin] + 2 ADP + 2 phosphate = protochlorophyllide a + reduced 2[4Fe-4S]-[ferredoxin] + 2 ATP + 2 H2O. Its pathway is porphyrin-containing compound metabolism; chlorophyll biosynthesis (light-independent). Component of the dark-operative protochlorophyllide reductase (DPOR) that uses Mg-ATP and reduced ferredoxin to reduce ring D of protochlorophyllide (Pchlide) to form chlorophyllide a (Chlide). This reaction is light-independent. The NB-protein (ChlN-ChlB) is the catalytic component of the complex. This is Light-independent protochlorophyllide reductase subunit B from Synechococcus sp. (strain CC9311).